We begin with the raw amino-acid sequence, 88 residues long: Co-chaperonin GroES (88 aa).

This sequence belongs to the GroES chaperonin family. Heptamer of 7 subunits arranged in a ring. Interacts with the chaperonin GroEL.

The protein localises to the cytoplasm. Functionally, together with the chaperonin GroEL, plays an essential role in assisting protein folding. The GroEL-GroES system forms a nano-cage that allows encapsulation of the non-native substrate proteins and provides a physical environment optimized to promote and accelerate protein folding. GroES binds to the apical surface of the GroEL ring, thereby capping the opening of the GroEL channel. The chain is Co-chaperonin GroES from Rubrobacter xylanophilus (strain DSM 9941 / JCM 11954 / NBRC 16129 / PRD-1).